Reading from the N-terminus, the 120-residue chain is Large ribosomal subunit protein uL14 (120 aa).

The protein belongs to the universal ribosomal protein uL14 family. As to quaternary structure, part of the 50S ribosomal subunit. Forms a cluster with proteins L3 and L19. In the 70S ribosome, L14 and L19 interact and together make contacts with the 16S rRNA in bridges B5 and B8.

Its function is as follows. Binds to 23S rRNA. Forms part of two intersubunit bridges in the 70S ribosome. In Dictyoglomus thermophilum (strain ATCC 35947 / DSM 3960 / H-6-12), this protein is Large ribosomal subunit protein uL14.